The following is a 392-amino-acid chain: Protein SRL2 (392 aa).

Phosphoserine is present on serine 11. Positions 18–52 (KPSETPKMEEEKLEVTNVNASSSKKVHKSKKSTSK) are disordered. Basic and acidic residues predominate over residues 21–31 (ETPKMEEEKLE). Over residues 41–50 (KKVHKSKKST) the composition is skewed to basic residues. At serine 139 the chain carries Phosphoserine. The tract at residues 284–303 (EDSTAVTNENGHISSEKNLK) is disordered. The segment covering 287–296 (TAVTNENGHI) has biased composition (polar residues).

Its subcellular location is the cytoplasm. The protein localises to the nucleus. The protein is Protein SRL2 (SRL2) of Saccharomyces cerevisiae (strain ATCC 204508 / S288c) (Baker's yeast).